The chain runs to 415 residues: Branched-chain-amino-acid aminotransferase, cytosolic (415 aa).

The residue at position 244 (K244) is an N6-(pyridoxal phosphate)lysine.

Belongs to the class-IV pyridoxal-phosphate-dependent aminotransferase family. Pyridoxal 5'-phosphate is required as a cofactor.

The protein resides in the cytoplasm. The enzyme catalyses L-leucine + 2-oxoglutarate = 4-methyl-2-oxopentanoate + L-glutamate. It catalyses the reaction L-isoleucine + 2-oxoglutarate = (S)-3-methyl-2-oxopentanoate + L-glutamate. It carries out the reaction L-valine + 2-oxoglutarate = 3-methyl-2-oxobutanoate + L-glutamate. In terms of biological role, catalyzes the first reaction in the catabolism of the essential branched chain amino acids leucine, isoleucine, and valine. The chain is Branched-chain-amino-acid aminotransferase, cytosolic (bcat-1) from Caenorhabditis elegans.